We begin with the raw amino-acid sequence, 161 residues long: Bacterial E2-like ubiquitin protein BilB (161 aa).

Cys-113 acts as the Glycyl thioester intermediate in catalysis.

Component of the Bil (bacterial ISG15-like) antiviral defense system, composed of BilA, BilB, BilC and BilD. The Bil system specifically conjugates a ubiquitin-like moiety (bilA) to the bacteriophage central tail fiber (CTF, or tip attachment protein J) via reactions involving E1 (bilD) and E2 (bilB). Modifies CTF of phage SECphi27 and SECphi4, which probably interferes with assembly of the phage tail. Also modifies T5 baseplate hub protein pb3 (gene D16), but not gp27 of phage T6 (Bil defends against T6). BilB probably accepts ubiquitin from the BilA-BilD (E1) complex and catalyzes its covalent attachment to target protein (CTF). Bil-encoding bacteria produce mostly defective phage SECphi27, many of which have phage assembly defects, including no tails. SECphi27 phage progeny produced in E.coli with the Bil system inject less DNA into naive host cells, maybe because the phage are less able to adsorb and inject their DNA into host cells. Functionally, expression of the Bil system in E.coli (strain MG1655) confers about 100-fold resistance to phage SECphi27, SECphi18, SECphi6, SECphi4 and T5, but not to SECphi17. When cells expressing the Bil system are infected by phage SECphi27 at low multiplicity of infection (0.03 MOI) the culture survives, at 3.0 MOI the culture collapses at the same time as cells without the Bil system. This chain is Bacterial E2-like ubiquitin protein BilB, found in Collimonas sp. (strain OK412).